Consider the following 91-residue polypeptide: Small ribosomal subunit protein uS15 (91 aa).

The protein belongs to the universal ribosomal protein uS15 family. As to quaternary structure, part of the 30S ribosomal subunit. Forms a bridge to the 50S subunit in the 70S ribosome, contacting the 23S rRNA.

One of the primary rRNA binding proteins, it binds directly to 16S rRNA where it helps nucleate assembly of the platform of the 30S subunit by binding and bridging several RNA helices of the 16S rRNA. Its function is as follows. Forms an intersubunit bridge (bridge B4) with the 23S rRNA of the 50S subunit in the ribosome. This is Small ribosomal subunit protein uS15 from Rickettsia africae (strain ESF-5).